Here is a 378-residue protein sequence, read N- to C-terminus: Queuine tRNA-ribosyltransferase (378 aa).

Catalysis depends on aspartate 92, which acts as the Proton acceptor. Residues aspartate 92–phenylalanine 96, aspartate 146, glutamine 188, and glycine 215 contribute to the substrate site. The tract at residues glycine 246 to glutamate 252 is RNA binding. Catalysis depends on aspartate 265, which acts as the Nucleophile. The RNA binding; important for wobble base 34 recognition stretch occupies residues threonine 270–arginine 274. Zn(2+) contacts are provided by cysteine 303, cysteine 305, cysteine 308, and histidine 334.

Belongs to the queuine tRNA-ribosyltransferase family. As to quaternary structure, homodimer. Within each dimer, one monomer is responsible for RNA recognition and catalysis, while the other monomer binds to the replacement base PreQ1. Zn(2+) serves as cofactor.

The enzyme catalyses 7-aminomethyl-7-carbaguanine + guanosine(34) in tRNA = 7-aminomethyl-7-carbaguanosine(34) in tRNA + guanine. It functions in the pathway tRNA modification; tRNA-queuosine biosynthesis. Functionally, catalyzes the base-exchange of a guanine (G) residue with the queuine precursor 7-aminomethyl-7-deazaguanine (PreQ1) at position 34 (anticodon wobble position) in tRNAs with GU(N) anticodons (tRNA-Asp, -Asn, -His and -Tyr). Catalysis occurs through a double-displacement mechanism. The nucleophile active site attacks the C1' of nucleotide 34 to detach the guanine base from the RNA, forming a covalent enzyme-RNA intermediate. The proton acceptor active site deprotonates the incoming PreQ1, allowing a nucleophilic attack on the C1' of the ribose to form the product. After dissociation, two additional enzymatic reactions on the tRNA convert PreQ1 to queuine (Q), resulting in the hypermodified nucleoside queuosine (7-(((4,5-cis-dihydroxy-2-cyclopenten-1-yl)amino)methyl)-7-deazaguanosine). The protein is Queuine tRNA-ribosyltransferase of Thermosynechococcus vestitus (strain NIES-2133 / IAM M-273 / BP-1).